The sequence spans 227 residues: Pyridoxal 5'-phosphate synthase subunit PdxT (227 aa).

L-glutamine is bound at residue 52 to 54 (GES). The active-site Nucleophile is Cys-84. Residues Arg-118 and 149-150 (IR) each bind L-glutamine. Catalysis depends on charge relay system residues His-189 and Glu-191.

The protein belongs to the glutaminase PdxT/SNO family. As to quaternary structure, in the presence of PdxS, forms a dodecamer of heterodimers. Only shows activity in the heterodimer.

It carries out the reaction aldehydo-D-ribose 5-phosphate + D-glyceraldehyde 3-phosphate + L-glutamine = pyridoxal 5'-phosphate + L-glutamate + phosphate + 3 H2O + H(+). The enzyme catalyses L-glutamine + H2O = L-glutamate + NH4(+). Its pathway is cofactor biosynthesis; pyridoxal 5'-phosphate biosynthesis. Functionally, catalyzes the hydrolysis of glutamine to glutamate and ammonia as part of the biosynthesis of pyridoxal 5'-phosphate. The resulting ammonia molecule is channeled to the active site of PdxS. This chain is Pyridoxal 5'-phosphate synthase subunit PdxT, found in Renibacterium salmoninarum (strain ATCC 33209 / DSM 20767 / JCM 11484 / NBRC 15589 / NCIMB 2235).